Here is a 91-residue protein sequence, read N- to C-terminus: MKTLLLTLVVMTIVCLDLGYSLICFISPHDSVTCAPGENVCFLKSWCDAWCGSRGKKLSFGCAATCPKVNPGIDIECCSTDNCNPHPKLRP.

Positions 1-21 are cleaved as a signal peptide; sequence MKTLLLTLVVMTIVCLDLGYS. Cystine bridges form between cysteine 24–cysteine 41, cysteine 34–cysteine 62, cysteine 47–cysteine 51, cysteine 66–cysteine 77, and cysteine 78–cysteine 83.

The protein belongs to the three-finger toxin family. Long-chain subfamily. Type II alpha-neurotoxin sub-subfamily. In terms of tissue distribution, expressed by the venom gland.

It localises to the secreted. Functionally, binds with high affinity to muscular (alpha-1/CHRNA1) and neuronal (alpha-7/CHRNA7) nicotinic acetylcholine receptor (nAChR) and inhibits acetylcholine from binding to the receptor, thereby impairing neuromuscular and neuronal transmission. This Ophiophagus hannah (King cobra) protein is Long neurotoxin OH-37.